The sequence spans 258 residues: Probable pectin methylesterase CGR3 (258 aa).

Residues 1-29 lie on the Cytoplasmic side of the membrane; sequence MSRRQVRRVGDSGSFPFVGALHSKSRSSP. A helical transmembrane segment spans residues 30-50; sequence LLSVCLVLVGACLLIGYAYSG. The Lumenal segment spans residues 51 to 258; the sequence is PGMFKSIREV…CQVFHLKPLH (208 aa). The N-linked (GlcNAc...) asparagine glycan is linked to Asn171.

Belongs to the class I-like SAM-binding methyltransferase superfamily.

Its subcellular location is the golgi apparatus membrane. Together with CGR2, required for homogalacturonan pectins (HG) methylesterification in the Golgi apparatus prior to integration into cell walls, essential for general growth and development. Promotes petiole elongation. Impacts photosynthesis and respiration efficiency by influencing leaf mesophyll morphology and physiology; pectin methylesterification modulates both expansion and positioning of cells in leaves, probably by changing cell walls plasticity. The chain is Probable pectin methylesterase CGR3 from Arabidopsis thaliana (Mouse-ear cress).